Consider the following 557-residue polypeptide: DNA ligase (557 aa).

E251 contributes to the ATP binding site. Catalysis depends on K253, which acts as the N6-AMP-lysine intermediate. ATP contacts are provided by R258, R273, E303, F342, R418, and K424.

The protein belongs to the ATP-dependent DNA ligase family. The cofactor is Mg(2+).

The catalysed reaction is ATP + (deoxyribonucleotide)n-3'-hydroxyl + 5'-phospho-(deoxyribonucleotide)m = (deoxyribonucleotide)n+m + AMP + diphosphate.. In terms of biological role, DNA ligase that seals nicks in double-stranded DNA during DNA replication, DNA recombination and DNA repair. In Methanosphaera stadtmanae (strain ATCC 43021 / DSM 3091 / JCM 11832 / MCB-3), this protein is DNA ligase.